The chain runs to 429 residues: UDP-N-acetylglucosamine 1-carboxyvinyltransferase (429 aa).

22-23 contacts phosphoenolpyruvate; that stretch reads KN. Arg102 contributes to the UDP-N-acetyl-alpha-D-glucosamine binding site. The active-site Proton donor is the Cys126. The residue at position 126 (Cys126) is a 2-(S-cysteinyl)pyruvic acid O-phosphothioketal. Residues 131–135, Asp316, and Ile338 contribute to the UDP-N-acetyl-alpha-D-glucosamine site; that span reads RPVDL.

This sequence belongs to the EPSP synthase family. MurA subfamily.

The protein localises to the cytoplasm. The catalysed reaction is phosphoenolpyruvate + UDP-N-acetyl-alpha-D-glucosamine = UDP-N-acetyl-3-O-(1-carboxyvinyl)-alpha-D-glucosamine + phosphate. It functions in the pathway cell wall biogenesis; peptidoglycan biosynthesis. Functionally, cell wall formation. Adds enolpyruvyl to UDP-N-acetylglucosamine. The protein is UDP-N-acetylglucosamine 1-carboxyvinyltransferase of Rhodopseudomonas palustris (strain TIE-1).